A 249-amino-acid chain; its full sequence is Chromosome-partitioning ATPase Soj (249 aa).

Residues Lys-15, Gly-16, Gly-17, Val-18, Gly-19, Lys-20, Thr-21, Thr-22, Pro-207, and Asn-209 each contribute to the ATP site. Residue Gly-17 participates in ADP binding. Residues Gly-19, Lys-20, Thr-21, Thr-22, Pro-207, and Asn-209 each contribute to the ADP site. A Mg(2+)-binding site is contributed by Thr-21.

This sequence belongs to the ParA family. In terms of assembly, monomer in the absence of nucleotides or presence of ADP, in the presence of ATP is found in a monomer-dimer equilibrium. ATP-binding is required for DNA-binding. Probably interacts with Spo0J.

The catalysed reaction is ATP + H2O = ADP + phosphate + H(+). With respect to regulation, ATPase activity is stimulated 10-fold in the presence of Spo0J and parS DNA (a plasmid centromere-like site or plasmid DNA itself). The first 20 residues of Spo0J stimulate its ATPase activity by 8%. Its function is as follows. ATPase probably involved in chromosome partitioning. Cooperatively binds dsDNA, forming nucleoprotein filaments in a strictly ATP-dependent fashion. Can also bind ssDNA with lower affinity. This chain is Chromosome-partitioning ATPase Soj, found in Thermus thermophilus (strain ATCC BAA-163 / DSM 7039 / HB27).